We begin with the raw amino-acid sequence, 88 residues long: Small ribosomal subunit protein uS15c (88 aa).

The protein belongs to the universal ribosomal protein uS15 family. Part of the 30S ribosomal subunit.

It is found in the plastid. It localises to the chloroplast. The protein is Small ribosomal subunit protein uS15c (rps15) of Calycanthus floridus var. glaucus (Eastern sweetshrub).